The sequence spans 1219 residues: NHS-like protein 2 (1219 aa).

Disordered regions lie at residues 162–181 (FRSS…QSAK), 288–321 (FSNF…HSAP), 336–364 (FPSL…SDHP), 400–423 (TPSA…GNSW), 474–591 (GLLA…ELVL), 669–741 (QGSS…SASV), 854–938 (GAEE…STAS), 979–1003 (IGLQ…KKPS), 1033–1087 (LEED…DKTA), and 1121–1197 (WKET…KTTN). The span at 288–312 (FSNFSQRDQGHSSSPTGSLARSATS) shows a compositional bias: polar residues. The segment covering 352 to 364 (GDAHQARSASDHP) has biased composition (basic and acidic residues). Position 499 is a phosphoserine (S499). Residues 526–545 (ASTSSEGSNSTDNIAALSTE) are compositionally biased toward polar residues. Positions 549-567 (RHRRQRSKSISLKKAKKKP) are enriched in basic residues. A Phosphoserine modification is found at S575. Low complexity predominate over residues 674–687 (SLASPSTSRATTPS). S690 is subject to Phosphoserine. 2 stretches are compositionally biased toward polar residues: residues 708–729 (MSPS…SMSL) and 897–908 (TSPTMAMASRSS). Phosphoserine is present on S1048. Basic and acidic residues predominate over residues 1076–1087 (AEEKSLISDKTA). Over residues 1131 to 1144 (SKPSSHSPVKNTAD) the composition is skewed to polar residues. The segment covering 1145-1160 (SPTGEAAAAPGPSSSA) has biased composition (low complexity). The residue at position 1208 (S1208) is a Phosphoserine.

It belongs to the NHS family.

This is NHS-like protein 2 from Mus musculus (Mouse).